A 67-amino-acid polypeptide reads, in one-letter code: Large ribosomal subunit protein uL29 (67 aa).

Belongs to the universal ribosomal protein uL29 family.

The sequence is that of Large ribosomal subunit protein uL29 from Polaromonas naphthalenivorans (strain CJ2).